A 353-amino-acid polypeptide reads, in one-letter code: Fe(3+) ions import ATP-binding protein FbpC (353 aa).

Residues 9–239 (VTFENVTKKF…PASAFIADFM (231 aa)) form the ABC transporter domain. 41–48 (GLSGCGKT) contributes to the ATP binding site.

Belongs to the ABC transporter superfamily. Fe(3+) ion importer (TC 3.A.1.10) family. The complex is composed of two ATP-binding proteins (FbpC), two transmembrane proteins (FbpB) and a solute-binding protein (FbpA).

The protein localises to the cell inner membrane. It catalyses the reaction Fe(3+)(out) + ATP + H2O = Fe(3+)(in) + ADP + phosphate + H(+). Its function is as follows. Part of the ABC transporter complex FbpABC involved in Fe(3+) ions import. Responsible for energy coupling to the transport system. In Brucella melitensis biotype 1 (strain ATCC 23456 / CCUG 17765 / NCTC 10094 / 16M), this protein is Fe(3+) ions import ATP-binding protein FbpC.